The primary structure comprises 438 residues: Transposon Ty2-C Gag polyprotein (438 aa).

Polar residues-rich tracts occupy residues 1–11, 19–39, and 49–60; these read MESQQLHQNPR, ASVT…SASN, and KVNSQQETTPGT. 3 disordered regions span residues 1–88, 365–397, and 419–438; these read MESQ…YQQH, NVSR…AKAH, and SSQY…TERI. The RNA-binding stretch occupies residues 295–397; that stretch reads ENNINVSDRL…SSKPRAAKAH (103 aa). A compositionally biased stretch (low complexity) spans 369–382; the sequence is TSPNTTNTKVTTRN.

Homotrimer.

It localises to the cytoplasm. Its function is as follows. Capsid protein (CA) is the structural component of the virus-like particle (VLP), forming the shell that encapsulates the retrotransposons dimeric RNA genome. The particles are assembled from trimer-clustered units and there are holes in the capsid shells that allow for the diffusion of macromolecules. CA also has nucleocapsid-like chaperone activity, promoting primer tRNA(i)-Met annealing to the multipartite primer-binding site (PBS), dimerization of Ty2 RNA and initiation of reverse transcription. The protein is Transposon Ty2-C Gag polyprotein (TY2A-C) of Saccharomyces cerevisiae (strain ATCC 204508 / S288c) (Baker's yeast).